The primary structure comprises 313 residues: MEKRKIILDCDPGHDDAIAIMMAAKHPVIDLLGITIVAGNQTLDKTLINGLNVCQKLEINVPVYAGMPQPIMRQQIVADNIHGETGLDGPVFGPLTRQAESTHAVKYIIDTLMASDGDITLVPVGPLSNIAVAMRMQPAILPKIREIVLMGGAYGTGNFTPSAEFNIFADPEAARVVFTSGVPLVMMGLDLTNQTVCTPDVIARMERVGGPAGELFSDIMNFTLKTQFENYGLAGGPVHDATCIGYLINPDGIKTQEMYVEVDVNSGPCYGRTVCDELGVLGKPANTKVGITIDTDWFWGLVEECVRGYIKTH.

Asp11 acts as the Proton acceptor in catalysis. Residues Asp11, Asp16, and Val124 each contribute to the Ca(2+) site. 2 residues coordinate substrate: Gln227 and His239. Asp240 is a Ca(2+) binding site.

This sequence belongs to the IUNH family. RihB subfamily. As to quaternary structure, homotetramer. Ca(2+) is required as a cofactor.

It carries out the reaction a pyrimidine ribonucleoside + H2O = a pyrimidine nucleobase + D-ribose. In terms of biological role, hydrolyzes cytidine or uridine to ribose and cytosine or uracil, respectively. Has a clear preference for cytidine over uridine. Strictly specific for ribonucleosides. The protein is Pyrimidine-specific ribonucleoside hydrolase RihB of Escherichia coli O17:K52:H18 (strain UMN026 / ExPEC).